Here is a 211-residue protein sequence, read N- to C-terminus: Endo-1,4-beta-xylanase 4 (211 aa).

Residues 1-16 form the signal peptide; it reads MKVTAAFAGLLVTAFA. The region spanning 19–210 is the GH11 domain; the sequence is VPEPVLVSRS…GACSASVTIS (192 aa). Asn101 carries an N-linked (GlcNAc...) asparagine glycan. The active-site Nucleophile is Glu106. Glu197 (proton donor) is an active-site residue.

The protein belongs to the glycosyl hydrolase 11 (cellulase G) family.

It localises to the secreted. The enzyme catalyses Endohydrolysis of (1-&gt;4)-beta-D-xylosidic linkages in xylans.. The protein operates within glycan degradation; xylan degradation. Functionally, endo-1,4-beta-xylanase involved in the hydrolysis of xylan, a major structural heterogeneous polysaccharide found in plant biomass representing the second most abundant polysaccharide in the biosphere, after cellulose. The chain is Endo-1,4-beta-xylanase 4 (XYN4) from Aspergillus niger.